The following is a 132-amino-acid chain: Small ribosomal subunit protein uS11 (132 aa).

It belongs to the universal ribosomal protein uS11 family. In terms of assembly, part of the 30S ribosomal subunit. Interacts with proteins S7 and S18. Binds to IF-3.

Located on the platform of the 30S subunit, it bridges several disparate RNA helices of the 16S rRNA. Forms part of the Shine-Dalgarno cleft in the 70S ribosome. The polypeptide is Small ribosomal subunit protein uS11 (Legionella pneumophila (strain Paris)).